Consider the following 466-residue polypeptide: Signal recognition particle 54 kDa protein (466 aa).

GTP is bound by residues 104–111, 184–188, and 242–245; these read GLQGSGKT, DTAGR, and TKLD. Positions 444 to 466 are disordered; the sequence is MQQGGGGGGGGGGGLGGMGPFGD. Residues 446-466 are compositionally biased toward gly residues; it reads QGGGGGGGGGGGLGGMGPFGD.

The protein belongs to the GTP-binding SRP family. SRP54 subfamily. Part of the signal recognition particle protein translocation system, which is composed of SRP and FtsY. Archaeal SRP consists of a 7S RNA molecule of 300 nucleotides and two protein subunits: SRP54 and SRP19.

It is found in the cytoplasm. The enzyme catalyses GTP + H2O = GDP + phosphate + H(+). Its function is as follows. Involved in targeting and insertion of nascent membrane proteins into the cytoplasmic membrane. Binds to the hydrophobic signal sequence of the ribosome-nascent chain (RNC) as it emerges from the ribosomes. The SRP-RNC complex is then targeted to the cytoplasmic membrane where it interacts with the SRP receptor FtsY. The sequence is that of Signal recognition particle 54 kDa protein from Natronomonas pharaonis (strain ATCC 35678 / DSM 2160 / CIP 103997 / JCM 8858 / NBRC 14720 / NCIMB 2260 / Gabara) (Halobacterium pharaonis).